The following is a 76-amino-acid chain: Large ribosomal subunit protein eL38 (76 aa).

It belongs to the eukaryotic ribosomal protein eL38 family.

This chain is Large ribosomal subunit protein eL38 (RpL38), found in Lysiphlebus testaceipes (Greenbugs aphid parastoid).